The primary structure comprises 171 residues: Glutamyl-tRNA(Gln) amidotransferase subunit F, mitochondrial (171 aa).

The protein belongs to the GatF family. In terms of assembly, subunit of the heterotrimeric GatFAB amidotransferase (AdT) complex, composed of A, B and F subunits.

The protein localises to the mitochondrion inner membrane. It carries out the reaction L-glutamyl-tRNA(Gln) + L-glutamine + ATP + H2O = L-glutaminyl-tRNA(Gln) + L-glutamate + ADP + phosphate + H(+). In terms of biological role, allows the formation of correctly charged Gln-tRNA(Gln) through the transamidation of misacylated Glu-tRNA(Gln) in the mitochondria. The reaction takes place in the presence of glutamine and ATP through an activated gamma-phospho-Glu-tRNA(Gln). Required for proper protein synthesis within the mitochondrion. This is Glutamyl-tRNA(Gln) amidotransferase subunit F, mitochondrial from Zygosaccharomyces rouxii (strain ATCC 2623 / CBS 732 / NBRC 1130 / NCYC 568 / NRRL Y-229).